The primary structure comprises 696 residues: Glycine--tRNA ligase beta subunit (696 aa).

It belongs to the class-II aminoacyl-tRNA synthetase family. Tetramer of two alpha and two beta subunits.

The protein localises to the cytoplasm. The enzyme catalyses tRNA(Gly) + glycine + ATP = glycyl-tRNA(Gly) + AMP + diphosphate. The chain is Glycine--tRNA ligase beta subunit from Methylorubrum extorquens (strain CM4 / NCIMB 13688) (Methylobacterium extorquens).